A 285-amino-acid chain; its full sequence is Aspartate/glutamate leucyltransferase (285 aa).

Belongs to the R-transferase family. Bpt subfamily.

It localises to the cytoplasm. The enzyme catalyses N-terminal L-glutamyl-[protein] + L-leucyl-tRNA(Leu) = N-terminal L-leucyl-L-glutamyl-[protein] + tRNA(Leu) + H(+). The catalysed reaction is N-terminal L-aspartyl-[protein] + L-leucyl-tRNA(Leu) = N-terminal L-leucyl-L-aspartyl-[protein] + tRNA(Leu) + H(+). Functionally, functions in the N-end rule pathway of protein degradation where it conjugates Leu from its aminoacyl-tRNA to the N-termini of proteins containing an N-terminal aspartate or glutamate. This is Aspartate/glutamate leucyltransferase from Dinoroseobacter shibae (strain DSM 16493 / NCIMB 14021 / DFL 12).